The primary structure comprises 118 residues: Holo-[acyl-carrier-protein] synthase (118 aa).

Asp8 and Glu58 together coordinate Mg(2+).

The protein belongs to the P-Pant transferase superfamily. AcpS family. Mg(2+) serves as cofactor.

The protein localises to the cytoplasm. It carries out the reaction apo-[ACP] + CoA = holo-[ACP] + adenosine 3',5'-bisphosphate + H(+). Functionally, transfers the 4'-phosphopantetheine moiety from coenzyme A to a Ser of acyl-carrier-protein. The protein is Holo-[acyl-carrier-protein] synthase of Streptococcus pyogenes serotype M1.